A 288-amino-acid chain; its full sequence is Oxaloacetate decarboxylase (288 aa).

A substrate-binding site is contributed by serine 47. Aspartate 85 is a binding site for Mg(2+). Substrate contacts are provided by arginine 156 and histidine 232.

This sequence belongs to the isocitrate lyase/PEP mutase superfamily. Oxaloacetate decarboxylase family. Homotetramer; dimer of dimers. Requires Mg(2+) as cofactor.

It catalyses the reaction oxaloacetate + H(+) = pyruvate + CO2. In terms of biological role, catalyzes the decarboxylation of oxaloacetate into pyruvate. Seems to play a role in maintaining cellular concentrations of bicarbonate and pyruvate. This Rhodopseudomonas palustris (strain TIE-1) protein is Oxaloacetate decarboxylase.